We begin with the raw amino-acid sequence, 584 residues long: Alpha-glucosidase MAL32 (584 aa).

The active-site Nucleophile is the D214. E276 (proton donor) is an active-site residue.

Belongs to the glycosyl hydrolase 13 family.

It carries out the reaction Hydrolysis of terminal, non-reducing (1-&gt;4)-linked alpha-D-glucose residues with release of alpha-D-glucose.. This is Alpha-glucosidase MAL32 (MAL32) from Saccharomyces cerevisiae (strain ATCC 204508 / S288c) (Baker's yeast).